The sequence spans 902 residues: 26S proteasome regulatory subunit rpn-1 (902 aa).

Basic and acidic residues predominate over residues 1 to 41 (MAQESDLSKTADKGKGKAVDDEKKHQDVDGKTPANGKKEEE). Residues 1-54 (MAQESDLSKTADKGKGKAVDDEKKHQDVDGKTPANGKKEEEQNASEELSEEDQQ) are disordered. Residues 42-52 (QNASEELSEED) show a composition bias toward acidic residues. PC repeat units lie at residues 415–448 (STVA…QIQA), 449–487 (GAYL…LIRV), 488–522 (ATIM…SMQV), 525–559 (MAAL…GSRL), 568–601 (ALGL…KPTA), 645–680 (AVLG…NIRR), 681–715 (AVPL…EVAI), and 716–750 (NAIF…DQES).

It belongs to the proteasome subunit S2 family.

Its function is as follows. Acts as a regulatory subunit of the 26 proteasome which is involved in the ATP-dependent degradation of ubiquitinated proteins. In Neurospora crassa (strain ATCC 24698 / 74-OR23-1A / CBS 708.71 / DSM 1257 / FGSC 987), this protein is 26S proteasome regulatory subunit rpn-1 (rpn-1).